We begin with the raw amino-acid sequence, 80 residues long: Translation initiation factor IF-1 (80 aa).

Residues 6–80 enclose the S1-like domain; that stretch reads RKQEHEKERG…LTRGRIVYRL (75 aa).

This sequence belongs to the IF-1 family. In terms of assembly, component of the 30S ribosomal translation pre-initiation complex which assembles on the 30S ribosome in the order IF-2 and IF-3, IF-1 and N-formylmethionyl-tRNA(fMet); mRNA recruitment can occur at any time during PIC assembly.

The protein resides in the cytoplasm. Functionally, one of the essential components for the initiation of protein synthesis. Stabilizes the binding of IF-2 and IF-3 on the 30S subunit to which N-formylmethionyl-tRNA(fMet) subsequently binds. Helps modulate mRNA selection, yielding the 30S pre-initiation complex (PIC). Upon addition of the 50S ribosomal subunit IF-1, IF-2 and IF-3 are released leaving the mature 70S translation initiation complex. The polypeptide is Translation initiation factor IF-1 (Aquifex aeolicus (strain VF5)).